The chain runs to 353 residues: Photosystem II D2 protein (353 aa).

T2 bears the N-acetylthreonine mark. Phosphothreonine is present on T2. A helical membrane pass occupies residues 41–61 (CAYFALGGWFTGTTFVTSWYT). Chlorophyll a is bound at residue H118. The helical transmembrane segment at 125–141 (GFMLRQFELARPVQLRP) threads the bilayer. Residues Q130 and N143 each coordinate pheophytin a. Residues 153 to 166 (VFLSVFLIYPLGQS) traverse the membrane as a helical segment. H198 contacts chlorophyll a. The helical transmembrane segment at 208-228 (AVLLCAIHGATVENTLFEDGD) threads the bilayer. Residues H215 and F262 each contribute to the a plastoquinone site. H215 contributes to the Fe cation binding site. H269 contacts Fe cation. Residues 279–295 (GLWMSAIGVVGLALNLR) form a helical membrane-spanning segment.

The protein belongs to the reaction center PufL/M/PsbA/D family. In terms of assembly, PSII is composed of 1 copy each of membrane proteins PsbA, PsbB, PsbC, PsbD, PsbE, PsbF, PsbH, PsbI, PsbJ, PsbK, PsbL, PsbM, PsbT, PsbX, PsbY, PsbZ, Psb30/Ycf12, at least 3 peripheral proteins of the oxygen-evolving complex and a large number of cofactors. It forms dimeric complexes. It depends on The D1/D2 heterodimer binds P680, chlorophylls that are the primary electron donor of PSII, and subsequent electron acceptors. It shares a non-heme iron and each subunit binds pheophytin, quinone, additional chlorophylls, carotenoids and lipids. There is also a Cl(-1) ion associated with D1 and D2, which is required for oxygen evolution. The PSII complex binds additional chlorophylls, carotenoids and specific lipids. as a cofactor. Only phosphorylated in mesophyll cells, phosphorylation increases when cells are grown under high rather than low light regimes (70 vs 900 umol photons/m-2/s).

It is found in the plastid. It localises to the chloroplast thylakoid membrane. It carries out the reaction 2 a plastoquinone + 4 hnu + 2 H2O = 2 a plastoquinol + O2. Functionally, photosystem II (PSII) is a light-driven water:plastoquinone oxidoreductase that uses light energy to abstract electrons from H(2)O, generating O(2) and a proton gradient subsequently used for ATP formation. It consists of a core antenna complex that captures photons, and an electron transfer chain that converts photonic excitation into a charge separation. The D1/D2 (PsbA/PsbD) reaction center heterodimer binds P680, the primary electron donor of PSII as well as several subsequent electron acceptors. D2 is needed for assembly of a stable PSII complex. The protein is Photosystem II D2 protein of Zea mays (Maize).